The following is a 317-amino-acid chain: Secreted frizzled-related protein 5 (317 aa).

Positions 1–29 (MRAAAAGGGVRTAALALLLGALHWAPARC) are cleaved as a signal peptide. The region spanning 48–165 (SKPPQCLDIP…PLDNDLCIAV (118 aa)) is the FZ domain. 8 disulfides stabilise this stretch: Cys-53/Cys-116, Cys-63/Cys-109, Cys-100/Cys-135, Cys-124/Cys-162, Cys-128/Cys-152, Cys-181/Cys-253, Cys-184/Cys-255, and Cys-198/Cys-303. The NTR domain maps to 181-303 (CAQCEMEHSA…AVKFMFSYPC (123 aa)).

It belongs to the secreted frizzled-related protein (sFRP) family. Highly expressed in the retinal pigment epithelium (RPE) and pancreas. Weak expression in heart, liver and muscle.

The protein resides in the secreted. In terms of biological role, soluble frizzled-related proteins (sFRPS) function as modulators of Wnt signaling through direct interaction with Wnts. They have a role in regulating cell growth and differentiation in specific cell types. SFRP5 may be involved in determining the polarity of photoreceptor, and perhaps, other cells in the retina. The polypeptide is Secreted frizzled-related protein 5 (SFRP5) (Homo sapiens (Human)).